Here is a 2435-residue protein sequence, read N- to C-terminus: Highly reducing polyketide synthase ATR6 (2435 aa).

Residues 18–450 (AEPIAIVSAA…GSNAHVVLDN (433 aa)) form the Ketosynthase family 3 (KS3) domain. Active-site for beta-ketoacyl synthase activity residues include C192, H331, and H371. The malonyl-CoA:ACP transacylase (MAT) domain stretch occupies residues 586-883 (FVFTGQGAQW…EIGPSAALGG (298 aa)). The active-site For malonyltransferase activity is the S682. Positions 979-1125 (HDLLGGKVLG…GLVRLALNAS (147 aa)) are N-terminal hotdog fold. The interval 979–1291 (HDLLGGKVLG…LRGISMTSVG (313 aa)) is dehydratase (DH) domain. Residues 979–1296 (HDLLGGKVLG…MTSVGLQGNV (318 aa)) enclose the PKS/mFAS DH domain. H1011 acts as the For beta-hydroxyacyl dehydratase activity in catalysis. The segment at 1141-1296 (QYPTPARFWY…MTSVGLQGNV (156 aa)) is C-terminal hotdog fold. An enoylreductase (ER) domain region spans residues 1724 to 2037 (GILDTLHFAE…DHNRLRNVVI (314 aa)). The segment at 2062–2301 (PEQTYLLVGK…ITGIAVPQPG (240 aa)) is catalytic ketoreductase (KRc) domain. In terms of domain architecture, Carrier spans 2353 to 2429 (VLLSSAVGVL…VLCQKIISRM (77 aa)). Residue S2389 is modified to O-(pantetheine 4'-phosphoryl)serine.

Its pathway is mycotoxin biosynthesis. Highly reducing polyketide synthase; part of the core atranone cluster (CAC) which products are predicted to catalyze most or all steps of mycotoxin atranone synthesis, starting from geranylgeranyl pyrophosphate (GGPP). The initial cyclization of GGPP to dolabellane is probably performed by the terpene cyclase ATR13. The Baeyer-Villiger oxidation near the end of the atranone synthesis, which converts atranones D and E to atranones F and G is predicted to be catalyzed by the monooxygenase ATR8. Of the CAC's other predicted gene products, the reducing PKS ATR6 might synthesize a polyketide chain. This polyketide is probably transferred onto the atranone backbone by the polyketide transferase ATR5. Other predicted CAC products include 4 oxygenases (ATR2, ATR3, ATR4, and ATR14), 3 short-chain reductases (ATR7, ATR9, and ATR10), and a methyltransferase (ATR12). These may all be involved in the various steps of atranone biosynthesis, although their specific roles must await experimental determination. The polypeptide is Highly reducing polyketide synthase ATR6 (Stachybotrys chlorohalonatus (strain IBT 40285)).